Consider the following 483-residue polypeptide: HSPB1-associated protein 1 (483 aa).

The disordered stretch occupies residues 1–26 (MAAGCEGIAPPTLGERTVGEEGEPVK). The interaction with HSPB1 stretch occupies residues 88–208 (ETECSYVDAT…EDTPFLYPTR (121 aa)). The 165-residue stretch at 124–288 (WAYADYKYFV…HLARVEEAIT (165 aa)) folds into the JmjC domain. Residues 388 to 416 (LIPVTPASEERGGALEGDSEESVSSNGGH) are disordered.

In terms of assembly, interacts with CRYAB and HSPB1.

The protein resides in the cytoplasm. May play a role in cellular stress response. This Mus musculus (Mouse) protein is HSPB1-associated protein 1 (Hspbap1).